Here is a 230-residue protein sequence, read N- to C-terminus: MDLKPIVALDLPDPSEALKLVHLLRPHIDFFKVGSQLFLAGGTDIIRRIIDCGADVFLDLKFHDIPRTVFRAVTEVVKLKVKFTTVHILGGREMLKEALEASAGSDTEILGVTVLTSMDDRGLESIGIAHAVEEEVLLLASMALEVGLRGIVCSGKELPLLGKLKKRASILVVPGIRWRGAAAYDQKRIIEPGEAKKGGATHVVVGRPILEAHDKVGLVQKLLCELNAIN.

Substrate is bound by residues Asp10, Lys32, 59–68, Thr116, Arg177, Gln186, Gly206, and Arg207; that span reads DLKFHDIPRT. Lys61 serves as the catalytic Proton donor.

The protein belongs to the OMP decarboxylase family. Type 1 subfamily. Homodimer.

The catalysed reaction is orotidine 5'-phosphate + H(+) = UMP + CO2. It functions in the pathway pyrimidine metabolism; UMP biosynthesis via de novo pathway; UMP from orotate: step 2/2. Functionally, catalyzes the decarboxylation of orotidine 5'-monophosphate (OMP) to uridine 5'-monophosphate (UMP). The chain is Orotidine 5'-phosphate decarboxylase from Methylacidiphilum infernorum (isolate V4) (Methylokorus infernorum (strain V4)).